The primary structure comprises 1207 residues: DNA-directed RNA polymerase subunit beta' (1207 aa).

Zn(2+) contacts are provided by C60, C62, C75, and C78. Residues D449, D451, and D453 each coordinate Mg(2+). Positions 822, 896, 903, and 906 each coordinate Zn(2+).

The protein belongs to the RNA polymerase beta' chain family. As to quaternary structure, the RNAP catalytic core consists of 2 alpha, 1 beta, 1 beta' and 1 omega subunit. When a sigma factor is associated with the core the holoenzyme is formed, which can initiate transcription. It depends on Mg(2+) as a cofactor. The cofactor is Zn(2+).

The catalysed reaction is RNA(n) + a ribonucleoside 5'-triphosphate = RNA(n+1) + diphosphate. In terms of biological role, DNA-dependent RNA polymerase catalyzes the transcription of DNA into RNA using the four ribonucleoside triphosphates as substrates. This is DNA-directed RNA polymerase subunit beta' from Staphylococcus aureus (strain NCTC 8325 / PS 47).